Reading from the N-terminus, the 563-residue chain is PHD finger protein EHD3 (563 aa).

The interval 1 to 46 is disordered; sequence MGSQNRPPPPRKRQPPPPEDHLVTYKRRRSKETQPLPLMANGANSK. PHD-type zinc fingers lie at residues 296–348, 420–472, and 474–524; these read LCPC…CSFK, SNLC…CWYC, and SCLC…CKIR.

Interacts with TRX1. As to expression, expressed in shoot apical meristem and leaves.

The protein resides in the nucleus. In terms of biological role, probable transcription factor involved in the regulation of floral induction under long day (LD) conditions. Promotes photoperiodic flowering by repressing GHD7, a major floral repressor. Seems to function independently of HD1. The sequence is that of PHD finger protein EHD3 from Oryza sativa subsp. japonica (Rice).